Consider the following 74-residue polypeptide: Probable tetrachloroethene reductive dehalogenase membrane anchor protein (74 aa).

Helical transmembrane passes span 11–31 and 40–60; these read ALGL…ISMG and AGSI…FLLM.

This sequence belongs to the PceB family.

Its subcellular location is the cell inner membrane. Functionally, may act as a membrane anchor for the tetrachloroethene reductive dehalogenase PceA. The chain is Probable tetrachloroethene reductive dehalogenase membrane anchor protein from Sulfurospirillum multivorans (Dehalospirillum multivorans).